A 360-amino-acid chain; its full sequence is Photosystem II protein D1 1 (360 aa).

3 consecutive transmembrane segments (helical) span residues 29 to 46, 118 to 133, and 142 to 156; these read YVGW…SATI, HFLI…EWEL, and WICI…AAAA. H118 contacts chlorophyll a. Position 126 (Y126) interacts with pheophytin a. [CaMn4O5] cluster contacts are provided by D170 and E189. A helical transmembrane segment spans residues 197 to 218; that stretch reads FHMLGVAGVFGGSLFSAMHGSL. H198 provides a ligand contact to chlorophyll a. A quinone-binding positions include H215 and 264–265; that span reads SF. Residue H215 coordinates Fe cation. Fe cation is bound at residue H272. A helical transmembrane segment spans residues 274–288; it reads FLAAWPVIGIWFTAL. [CaMn4O5] cluster contacts are provided by H332, E333, D342, and A344. A propeptide spanning residues 345–360 is cleaved from the precursor; the sequence is GTESAPVAVGNADLNG.

Belongs to the reaction center PufL/M/PsbA/D family. PSII is composed of 1 copy each of membrane proteins PsbA, PsbB, PsbC, PsbD, PsbE, PsbF, PsbH, PsbI, PsbJ, PsbK, PsbL, PsbM, PsbT, PsbX, Psb30/Ycf12, peripheral proteins PsbO, CyanoQ (PsbQ), PsbU, PsbV and a large number of cofactors. It forms dimeric complexes. It depends on The D1/D2 heterodimer binds P680, chlorophylls that are the primary electron donor of PSII, and subsequent electron acceptors. It shares a non-heme iron and each subunit binds pheophytin, quinone, additional chlorophylls, carotenoids and lipids. D1 provides most of the ligands for the Mn4-Ca-O5 cluster of the oxygen-evolving complex (OEC). There is also a Cl(-1) ion associated with D1 and D2, which is required for oxygen evolution. The PSII complex binds additional chlorophylls, carotenoids and specific lipids. as a cofactor. In terms of processing, tyr-161 forms a radical intermediate that is referred to as redox-active TyrZ, YZ or Y-Z. Post-translationally, C-terminally processed by CtpA; processing is essential to allow assembly of the oxygen-evolving complex and thus photosynthetic growth.

The protein localises to the cell inner membrane. The enzyme catalyses 2 a plastoquinone + 4 hnu + 2 H2O = 2 a plastoquinol + O2. Its function is as follows. Photosystem II (PSII) is a light-driven water:plastoquinone oxidoreductase that uses light energy to abstract electrons from H(2)O, generating O(2) and a proton gradient subsequently used for ATP formation. It consists of a core antenna complex that captures photons, and an electron transfer chain that converts photonic excitation into a charge separation. The D1/D2 (PsbA/PsbD) reaction center heterodimer binds P680, the primary electron donor of PSII as well as several subsequent electron acceptors. This Gloeobacter violaceus (strain ATCC 29082 / PCC 7421) protein is Photosystem II protein D1 1.